Reading from the N-terminus, the 715-residue chain is SANT and BTB domain regulator of class switch recombination (715 aa).

In terms of domain architecture, SANT spans 21-59; sequence DMILCSLVGVPQPISWDSVARLVPGYTPKECAKRFEELK. Residues 146–254 enclose the BTB domain; sequence MVIHVCDEAK…ECIRYCHKNM (109 aa). Residues 552–573 are compositionally biased toward acidic residues; that stretch reads SEEEDYTTGSEVTEDEVGDEEE. 2 disordered regions span residues 552 to 623 and 689 to 715; these read SEEE…VSLQ and SAHS…GRPT. Residues 578 to 605 show a composition bias toward basic residues; sequence QAGRKVKPKRSAKQTKKHISSPSIHKKE. 2 stretches are compositionally biased toward polar residues: residues 614–623 and 690–699; these read DSSPFTVSLQ and AHSNTRQMNT.

The protein belongs to the KIAA1841 family. In terms of assembly, homodimer.

Functionally, negatively regulates class switch recombination or isotype switching in splenic B-cells. In Xenopus laevis (African clawed frog), this protein is SANT and BTB domain regulator of class switch recombination.